A 506-amino-acid chain; its full sequence is Maturase K (506 aa).

It belongs to the intron maturase 2 family. MatK subfamily.

Its subcellular location is the plastid. It is found in the chloroplast. Its function is as follows. Usually encoded in the trnK tRNA gene intron. Probably assists in splicing its own and other chloroplast group II introns. This is Maturase K from Rhododendron ferrugineum (Alpenrose).